A 318-amino-acid polypeptide reads, in one-letter code: L-lactate dehydrogenase (318 aa).

Residues V18, D39, K44, Y69, and 83-84 (GA) contribute to the NAD(+) site. The substrate site is built by Q86 and R92. Residues S105, 122–124 (VSN), and S147 contribute to the NAD(+) site. Substrate is bound at residue 124–127 (NPVD). 152-155 (DTSR) lines the substrate pocket. Catalysis depends on H179, which acts as the Proton acceptor. A Phosphotyrosine modification is found at Y225. Substrate is bound at residue T234.

This sequence belongs to the LDH/MDH superfamily. LDH family. Homotetramer.

The protein resides in the cytoplasm. The enzyme catalyses (S)-lactate + NAD(+) = pyruvate + NADH + H(+). It participates in fermentation; pyruvate fermentation to lactate; (S)-lactate from pyruvate: step 1/1. Its function is as follows. Catalyzes the conversion of lactate to pyruvate. This Clostridium botulinum (strain Loch Maree / Type A3) protein is L-lactate dehydrogenase.